We begin with the raw amino-acid sequence, 431 residues long: Probable sodium/metabolite cotransporter BASS3, chloroplastic (431 aa).

A chloroplast-targeting transit peptide spans 1–70 (MTLIASLSLP…RRNSGLVPVV (70 aa)). The next 9 membrane-spanning stretches (helical) occupy residues 110–130 (FWSALLPFVVALTAVAALSYP), 145–165 (LGGIMLSIGIQLSVDDFALAF), 169–189 (VPLSVGFVAQYVLKPLLGVLV), 198–218 (TFYAGFILTCCVAGAQLSSYA), 238–258 (IASVIFTPLLSGLLIGSVVPV), 261–281 (VAMSKSILQVVLVPITLGLVL), 288–308 (VVTLLQPVMPFVAMVCTSLCI), 325–345 (LGLIVPIVTFHAVAFALGYWF), and 387–407 (VPAACSVVVMAIMGLCLASFW).

Belongs to the bile acid:sodium symporter (BASS) (TC 2.A.28) family.

It is found in the membrane. It localises to the plastid. Its subcellular location is the chloroplast envelope. Its function is as follows. May function as sodium-coupled metabolite transporter across the chloroplast envelope. The chain is Probable sodium/metabolite cotransporter BASS3, chloroplastic (BASS3) from Arabidopsis thaliana (Mouse-ear cress).